The chain runs to 190 residues: GTP cyclohydrolase 1 (190 aa).

Zn(2+)-binding residues include C80, H83, and C151.

This sequence belongs to the GTP cyclohydrolase I family. In terms of assembly, toroid-shaped homodecamer, composed of two pentamers of five dimers.

The enzyme catalyses GTP + H2O = 7,8-dihydroneopterin 3'-triphosphate + formate + H(+). It participates in cofactor biosynthesis; 7,8-dihydroneopterin triphosphate biosynthesis; 7,8-dihydroneopterin triphosphate from GTP: step 1/1. In Rickettsia felis (strain ATCC VR-1525 / URRWXCal2) (Rickettsia azadi), this protein is GTP cyclohydrolase 1.